We begin with the raw amino-acid sequence, 259 residues long: 3-oxo-5-alpha-steroid 4-dehydrogenase 1 (259 aa).

Helical transmembrane passes span Leu-10 to Gly-30, Val-86 to Ile-106, Pro-111 to Gln-131, Val-146 to Ile-166, and Trp-206 to Leu-226.

The protein belongs to the steroid 5-alpha reductase family. As to expression, liver and prostate (at a low level).

It localises to the microsome membrane. It is found in the endoplasmic reticulum membrane. It carries out the reaction a 3-oxo-5alpha-steroid + NADP(+) = a 3-oxo-Delta(4)-steroid + NADPH + H(+). The enzyme catalyses 5alpha-pregnane-3,20-dione + NADP(+) = progesterone + NADPH + H(+). It catalyses the reaction 17beta-hydroxy-5alpha-androstan-3-one + NADP(+) = testosterone + NADPH + H(+). The catalysed reaction is androst-4-ene-3,17-dione + NADPH + H(+) = 5alpha-androstan-3,17-dione + NADP(+). Converts testosterone into 5-alpha-dihydrotestosterone and progesterone or corticosterone into their corresponding 5-alpha-3-oxosteroids. It plays a central role in sexual differentiation and androgen physiology. The protein is 3-oxo-5-alpha-steroid 4-dehydrogenase 1 of Rattus norvegicus (Rat).